A 154-amino-acid chain; its full sequence is Transcriptional repressor NrdR (154 aa).

A zinc finger spans residues 3–34 (CPTCKYNGTRVVDSRPADDGNSIRRRRECEKC). The ATP-cone domain maps to 49-139 (LIVVKKDGAR…VYRQFKDISV (91 aa)).

This sequence belongs to the NrdR family. It depends on Zn(2+) as a cofactor.

Functionally, negatively regulates transcription of bacterial ribonucleotide reductase nrd genes and operons by binding to NrdR-boxes. This is Transcriptional repressor NrdR from Listeria innocua serovar 6a (strain ATCC BAA-680 / CLIP 11262).